The sequence spans 291 residues: NAD kinase (291 aa).

The Proton acceptor role is filled by D73. Residues D73–G74, N147–D148, R175, D177, and Q246 each bind NAD(+).

The protein belongs to the NAD kinase family. The cofactor is a divalent metal cation.

It is found in the cytoplasm. The enzyme catalyses NAD(+) + ATP = ADP + NADP(+) + H(+). Involved in the regulation of the intracellular balance of NAD and NADP, and is a key enzyme in the biosynthesis of NADP. Catalyzes specifically the phosphorylation on 2'-hydroxyl of the adenosine moiety of NAD to yield NADP. This chain is NAD kinase, found in Laribacter hongkongensis (strain HLHK9).